The sequence spans 206 residues: Tektin bundle-interacting protein 1 (206 aa).

Microtubule inner protein component of sperm flagellar doublet microtubules.

The protein localises to the cytoplasm. The protein resides in the cytoskeleton. Its subcellular location is the cilium axoneme. It is found in the flagellum axoneme. Its function is as follows. Microtubule inner protein (MIP) part of the dynein-decorated doublet microtubules (DMTs) in cilia axoneme, which is required for motile cilia beating. Located at the center of the tektin bundle where may function to recruit tektins or stabilize the bundle. The polypeptide is Tektin bundle-interacting protein 1 (Mus musculus (Mouse)).